We begin with the raw amino-acid sequence, 208 residues long: MARYRGPVEKIERRLGVSLALKGERRLAGKSALEKRPYPPGQHGQRRSKISEYGLQLREKQKAKFMYGVAEKQFRNLFKEANRMEGNTGENLIKLLERRLDNVVYRMGFATTRRFARQLVNHGHVLVDGKRVNIPSFRVKPGQKIEIREKSKNNPQIQRSLELTNQTGIVPWVDVDKEKVFGIFTRIPEREEIDIPVEERLIVELYSK.

The tract at residues 30–49 is disordered; sequence KSALEKRPYPPGQHGQRRSK. Residues 98–161 enclose the S4 RNA-binding domain; that stretch reads RRLDNVVYRM…KNNPQIQRSL (64 aa).

It belongs to the universal ribosomal protein uS4 family. Part of the 30S ribosomal subunit. Contacts protein S5. The interaction surface between S4 and S5 is involved in control of translational fidelity.

Its function is as follows. One of the primary rRNA binding proteins, it binds directly to 16S rRNA where it nucleates assembly of the body of the 30S subunit. In terms of biological role, with S5 and S12 plays an important role in translational accuracy. This chain is Small ribosomal subunit protein uS4, found in Nitratiruptor sp. (strain SB155-2).